Here is a 76-residue protein sequence, read N- to C-terminus: ATP synthase subunit c (76 aa).

The next 2 membrane-spanning stretches (helical) occupy residues 5-25 (GIIA…GIGI) and 54-74 (AALA…LVFL).

Belongs to the ATPase C chain family. F-type ATPases have 2 components, F(1) - the catalytic core - and F(0) - the membrane proton channel. F(1) has five subunits: alpha(3), beta(3), gamma(1), delta(1), epsilon(1). F(0) has three main subunits: a(1), b(2) and c(10-14). The alpha and beta chains form an alternating ring which encloses part of the gamma chain. F(1) is attached to F(0) by a central stalk formed by the gamma and epsilon chains, while a peripheral stalk is formed by the delta and b chains.

It is found in the cell membrane. Its function is as follows. F(1)F(0) ATP synthase produces ATP from ADP in the presence of a proton or sodium gradient. F-type ATPases consist of two structural domains, F(1) containing the extramembraneous catalytic core and F(0) containing the membrane proton channel, linked together by a central stalk and a peripheral stalk. During catalysis, ATP synthesis in the catalytic domain of F(1) is coupled via a rotary mechanism of the central stalk subunits to proton translocation. Key component of the F(0) channel; it plays a direct role in translocation across the membrane. A homomeric c-ring of between 10-14 subunits forms the central stalk rotor element with the F(1) delta and epsilon subunits. The chain is ATP synthase subunit c from Ruminiclostridium cellulolyticum (strain ATCC 35319 / DSM 5812 / JCM 6584 / H10) (Clostridium cellulolyticum).